A 320-amino-acid polypeptide reads, in one-letter code: ATP-dependent 6-phosphofructokinase isozyme 1 (320 aa).

Gly12 contacts ATP. ADP contacts are provided by residues 22–26 (RGVVR) and 55–60 (RYSVSD). ATP contacts are provided by residues 73 to 74 (RF) and 103 to 106 (GDGS). Mg(2+) is bound at residue Asp104. Substrate is bound at residue 126-128 (TID). Asp128 serves as the catalytic Proton acceptor. Residue Arg155 participates in ADP binding. Residues Arg163 and 170 to 172 (MGR) each bind substrate. ADP is bound by residues 186–188 (GCE), Lys212, and 214–216 (KKH). Residues Glu223, Arg244, and 250–253 (HIQR) contribute to the substrate site.

It belongs to the phosphofructokinase type A (PFKA) family. ATP-dependent PFK group I subfamily. Prokaryotic clade 'B1' sub-subfamily. Homotetramer. Requires Mg(2+) as cofactor.

The protein localises to the cytoplasm. It catalyses the reaction beta-D-fructose 6-phosphate + ATP = beta-D-fructose 1,6-bisphosphate + ADP + H(+). The protein operates within carbohydrate degradation; glycolysis; D-glyceraldehyde 3-phosphate and glycerone phosphate from D-glucose: step 3/4. Its activity is regulated as follows. Allosterically activated by ADP and other diphosphonucleosides, and allosterically inhibited by phosphoenolpyruvate. In terms of biological role, catalyzes the phosphorylation of D-fructose 6-phosphate to fructose 1,6-bisphosphate by ATP, the first committing step of glycolysis. This chain is ATP-dependent 6-phosphofructokinase isozyme 1, found in Escherichia coli O6:H1 (strain CFT073 / ATCC 700928 / UPEC).